We begin with the raw amino-acid sequence, 259 residues long: Ribonuclease PH (259 aa).

Phosphate-binding positions include R88 and 126–128 (GTR).

It belongs to the RNase PH family. Homohexameric ring arranged as a trimer of dimers.

The enzyme catalyses tRNA(n+1) + phosphate = tRNA(n) + a ribonucleoside 5'-diphosphate. Its function is as follows. Phosphorolytic 3'-5' exoribonuclease that plays an important role in tRNA 3'-end maturation. Removes nucleotide residues following the 3'-CCA terminus of tRNAs; can also add nucleotides to the ends of RNA molecules by using nucleoside diphosphates as substrates, but this may not be physiologically important. Probably plays a role in initiation of 16S rRNA degradation (leading to ribosome degradation) during starvation. In Mycolicibacterium paratuberculosis (strain ATCC BAA-968 / K-10) (Mycobacterium paratuberculosis), this protein is Ribonuclease PH.